A 414-amino-acid polypeptide reads, in one-letter code: Secernin-1 (414 aa).

This sequence belongs to the peptidase C69 family. Secernin subfamily.

It is found in the cytoplasm. Its function is as follows. Regulates exocytosis in mast cells. Increases both the extent of secretion and the sensitivity of mast cells to stimulation with calcium. This chain is Secernin-1 (Scrn1), found in Mus musculus (Mouse).